The following is a 173-amino-acid chain: Peptidoglycan-associated lipoprotein (173 aa).

Residues 1-21 (MQLNKVLKGLMIALPVMAIAA) form the signal peptide. The N-palmitoyl cysteine moiety is linked to residue Cys-22. Residue Cys-22 is the site of S-diacylglycerol cysteine attachment. The segment at 30–58 (NDGSEGMLGAGTGMDANGGNGNMSSEEQA) is disordered. Residues 35 to 50 (GMLGAGTGMDANGGNG) are compositionally biased toward gly residues. In terms of domain architecture, OmpA-like spans 60 to 173 (LQMQQLQQNN…SKNRRAVLVY (114 aa)).

This sequence belongs to the Pal lipoprotein family. The Tol-Pal system is composed of five core proteins: the inner membrane proteins TolA, TolQ and TolR, the periplasmic protein TolB and the outer membrane protein Pal. They form a network linking the inner and outer membranes and the peptidoglycan layer.

It localises to the cell outer membrane. Part of the Tol-Pal system, which plays a role in outer membrane invagination during cell division and is important for maintaining outer membrane integrity. The protein is Peptidoglycan-associated lipoprotein of Escherichia coli O157:H7.